The following is a 626-amino-acid chain: ATP-dependent RNA helicase cyt-19, mitochondrial (626 aa).

Positions 74–103 (ADLAALGVHENVVRAITHGMGYENMTEVQS) match the Q motif motif. One can recognise a Helicase ATP-binding domain in the interval 106–297 (ISPALKGKDI…RSYIDKNNFE (192 aa)). An ATP-binding site is contributed by 119–126 (AKTGTGKT). The short motif at 241 to 244 (DEAD) is the DEAD box element. One can recognise a Helicase C-terminal domain in the interval 329 to 493 (AMLELIEKAL…CASVNAADSG (165 aa)). The interval 569–626 (LRVETREHSMRPMGSGPGHRRDFNSRGPRRQSDDPFENALHRAQDLDRRPTRRQQASF) is disordered. The RNA-binding stretch occupies residues 578–626 (MRPMGSGPGHRRDFNSRGPRRQSDDPFENALHRAQDLDRRPTRRQQASF). A compositionally biased stretch (basic and acidic residues) spans 607-617 (ALHRAQDLDRR).

Belongs to the DEAD box helicase family.

The protein localises to the mitochondrion matrix. It catalyses the reaction ATP + H2O = ADP + phosphate + H(+). Activated by exposed helices in a group I intron RNA. Functionally, acts as an RNA chaperone to resolve non-native structures formed during RNA folding to promote mitochondrial group I, but also group II, intron splicing. Functions predominantly by disrupting accessible RNA secondary structure and depends on spontaneous openings in tightly packed RNAs to gain access to RNA helices. In Neurospora crassa (strain ATCC 24698 / 74-OR23-1A / CBS 708.71 / DSM 1257 / FGSC 987), this protein is ATP-dependent RNA helicase cyt-19, mitochondrial.